Reading from the N-terminus, the 81-residue chain is Small ribosomal subunit protein bS16 (81 aa).

This sequence belongs to the bacterial ribosomal protein bS16 family.

In Phytoplasma mali (strain AT), this protein is Small ribosomal subunit protein bS16.